The following is a 176-amino-acid chain: MSSDLKKINKVKKNSRRISNTQEPKLVERLIKISRVSKVTKGGKKLSFRAIVVVGDENGKVGVGVAKADDVVNAFKKAKTDGRKNLIELPITKALSIPHNVAGNFGACKVIMRPSIEGSGVIAGGAVRIVLEVAGVKNVIAKQLGSNNLLNNARASVCALQNLTTKAQVAKKRNLD.

The S5 DRBM domain occupies 26 to 89 (LVERLIKISR…TDGRKNLIEL (64 aa)).

The protein belongs to the universal ribosomal protein uS5 family. As to quaternary structure, part of the 30S ribosomal subunit. Contacts protein S4.

The protein resides in the plastid. Its subcellular location is the chloroplast. Its function is as follows. With S4 and S12 plays an important role in translational accuracy. The sequence is that of Small ribosomal subunit protein uS5c (rps5) from Phaeodactylum tricornutum (strain CCAP 1055/1).